Consider the following 174-residue polypeptide: Gamma-crystallin C (174 aa).

2 consecutive Beta/gamma crystallin 'Greek key' domains span residues 2-40 and 41-83; these read GKITFYEDRGFQGRCYQCSSDCPNLQPYFSRCNSIRVDS and GCWM…CLIS. Residue Cys-23 is modified to S-methylcysteine. A connecting peptide region spans residues 84–87; sequence DTSS. Beta/gamma crystallin 'Greek key' domains lie at 88–128 and 129–171; these read HRLR…HVLE and GCWV…RRVV.

The protein belongs to the beta/gamma-crystallin family.

Crystallins are the dominant structural components of the vertebrate eye lens. The sequence is that of Gamma-crystallin C (CRYGC) from Bos taurus (Bovine).